A 333-amino-acid polypeptide reads, in one-letter code: Holliday junction branch migration complex subunit RuvB (333 aa).

The large ATPase domain (RuvB-L) stretch occupies residues 1–181 (MNDILNKEPM…FGISSHMEYY (181 aa)). ATP is bound by residues Leu-20, Arg-21, Gly-62, Lys-65, Thr-66, Thr-67, 128–130 (EDF), Arg-171, Tyr-181, and Arg-218. Position 66 (Thr-66) interacts with Mg(2+). Positions 182–252 (QERDLEEIVK…ITDKALTILD (71 aa)) are small ATPAse domain (RuvB-S). The segment at 255–333 (AAGLDYIDQK…HLGYVYNEEE (79 aa)) is head domain (RuvB-H). 3 residues coordinate DNA: Arg-291, Arg-310, and Arg-315.

Belongs to the RuvB family. In terms of assembly, homohexamer. Forms an RuvA(8)-RuvB(12)-Holliday junction (HJ) complex. HJ DNA is sandwiched between 2 RuvA tetramers; dsDNA enters through RuvA and exits via RuvB. An RuvB hexamer assembles on each DNA strand where it exits the tetramer. Each RuvB hexamer is contacted by two RuvA subunits (via domain III) on 2 adjacent RuvB subunits; this complex drives branch migration. In the full resolvosome a probable DNA-RuvA(4)-RuvB(12)-RuvC(2) complex forms which resolves the HJ.

It localises to the cytoplasm. It carries out the reaction ATP + H2O = ADP + phosphate + H(+). In terms of biological role, the RuvA-RuvB-RuvC complex processes Holliday junction (HJ) DNA during genetic recombination and DNA repair, while the RuvA-RuvB complex plays an important role in the rescue of blocked DNA replication forks via replication fork reversal (RFR). RuvA specifically binds to HJ cruciform DNA, conferring on it an open structure. The RuvB hexamer acts as an ATP-dependent pump, pulling dsDNA into and through the RuvAB complex. RuvB forms 2 homohexamers on either side of HJ DNA bound by 1 or 2 RuvA tetramers; 4 subunits per hexamer contact DNA at a time. Coordinated motions by a converter formed by DNA-disengaged RuvB subunits stimulates ATP hydrolysis and nucleotide exchange. Immobilization of the converter enables RuvB to convert the ATP-contained energy into a lever motion, pulling 2 nucleotides of DNA out of the RuvA tetramer per ATP hydrolyzed, thus driving DNA branch migration. The RuvB motors rotate together with the DNA substrate, which together with the progressing nucleotide cycle form the mechanistic basis for DNA recombination by continuous HJ branch migration. Branch migration allows RuvC to scan DNA until it finds its consensus sequence, where it cleaves and resolves cruciform DNA. In Lactococcus lactis subsp. cremoris (strain SK11), this protein is Holliday junction branch migration complex subunit RuvB.